The following is a 352-amino-acid chain: Guanidino acid hydrolase, mitochondrial (352 aa).

A mitochondrion-targeting transit peptide spans 1–35 (MLRLLASGCARGPGPGVGARPAAGLFHPGRRQSRQ). Residues 11 to 49 (RGPGPGVGARPAAGLFHPGRRQSRQASDAPRNQPPSPEF) form a disordered region. Mn(2+) contacts are provided by histidine 162, aspartate 185, histidine 187, and aspartate 189. Residue lysine 193 is modified to N6-acetyllysine. Lysine 217 bears the N6-acetyllysine; alternate mark. Lysine 217 carries the N6-succinyllysine; alternate modification. Mn(2+) is bound by residues aspartate 276 and aspartate 278.

The protein belongs to the ureohydrolase superfamily. Arginase family. Mn(2+) is required as a cofactor. As to expression, highly expressed in liver and kidney. Also found in skeletal muscle, fetal liver, brain, testis, skin and the gastrointestinal tract. Within brain, expression is higher in the cerebral cortex with lower levels in the medulla and spinal cord.

It is found in the mitochondrion. The catalysed reaction is 3-guanidinopropanoate + H2O = urea + beta-alanine. The enzyme catalyses 4-guanidinobutanoate + H2O = urea + 4-aminobutanoate. It catalyses the reaction taurocyamine + H2O = urea + taurine. It carries out the reaction L-arginine + H2O = urea + L-ornithine. It functions in the pathway nitrogen metabolism; urea cycle; L-ornithine and urea from L-arginine: step 1/1. Its function is as follows. Hydrolyzes linear guanidino acids to form urea and the corresponding amines. Displays specificity for substrates having a negatively charged head group and short chains including taurocyamine, guanidino propanoic and butanoic acids. May protect cells by detoxifying potentially harmful amounts of guanidino acids. Metabolizes L-arginine with low efficiency. This Homo sapiens (Human) protein is Guanidino acid hydrolase, mitochondrial (AGMAT).